Reading from the N-terminus, the 557-residue chain is Dihydroxy-acid dehydratase (557 aa).

Cys50 lines the [2Fe-2S] cluster pocket. Mg(2+) is bound at residue Asp82. Cys123 is a [2Fe-2S] cluster binding site. Positions 124 and 125 each coordinate Mg(2+). Lys125 bears the N6-carboxylysine mark. Position 195 (Cys195) interacts with [2Fe-2S] cluster. Position 447 (Glu447) interacts with Mg(2+). The Proton acceptor role is filled by Ser473.

Belongs to the IlvD/Edd family. As to quaternary structure, homodimer. Requires [2Fe-2S] cluster as cofactor. The cofactor is Mg(2+).

It catalyses the reaction (2R)-2,3-dihydroxy-3-methylbutanoate = 3-methyl-2-oxobutanoate + H2O. It carries out the reaction (2R,3R)-2,3-dihydroxy-3-methylpentanoate = (S)-3-methyl-2-oxopentanoate + H2O. Its pathway is amino-acid biosynthesis; L-isoleucine biosynthesis; L-isoleucine from 2-oxobutanoate: step 3/4. The protein operates within amino-acid biosynthesis; L-valine biosynthesis; L-valine from pyruvate: step 3/4. Its function is as follows. Functions in the biosynthesis of branched-chain amino acids. Catalyzes the dehydration of (2R,3R)-2,3-dihydroxy-3-methylpentanoate (2,3-dihydroxy-3-methylvalerate) into 2-oxo-3-methylpentanoate (2-oxo-3-methylvalerate) and of (2R)-2,3-dihydroxy-3-methylbutanoate (2,3-dihydroxyisovalerate) into 2-oxo-3-methylbutanoate (2-oxoisovalerate), the penultimate precursor to L-isoleucine and L-valine, respectively. The protein is Dihydroxy-acid dehydratase of Nitrosomonas eutropha (strain DSM 101675 / C91 / Nm57).